A 197-amino-acid chain; its full sequence is Imidazoleglycerol-phosphate dehydratase (197 aa).

This sequence belongs to the imidazoleglycerol-phosphate dehydratase family.

Its subcellular location is the cytoplasm. The catalysed reaction is D-erythro-1-(imidazol-4-yl)glycerol 3-phosphate = 3-(imidazol-4-yl)-2-oxopropyl phosphate + H2O. It participates in amino-acid biosynthesis; L-histidine biosynthesis; L-histidine from 5-phospho-alpha-D-ribose 1-diphosphate: step 6/9. This is Imidazoleglycerol-phosphate dehydratase from Rhodopseudomonas palustris (strain BisB5).